Here is a 338-residue protein sequence, read N- to C-terminus: Protein UL141 (338 aa).

A signal peptide spans 1-25 (MCRRESLRTLPWLFWVLLSCPRLLE). At 37-278 (DIAEKMWAEN…DTGMSPWATR (242 aa)) the chain is on the extracellular side. Residues Asn-117, Asn-132, and Asn-147 are each glycosylated (N-linked (GlcNAc...) asparagine; by host). The chain crosses the membrane as a helical span at residues 279–299 (GIAAFLGFWSIFTVCFLCYLC). The Cytoplasmic portion of the chain corresponds to 300–338 (YLQCCGHWCPTPGRGRRGGEGYRRLPTYDSYPGVKKMKR).

As to quaternary structure, interacts with human PVR. Interacts with human TNFRSF10A and TNFRSF10B. Forms a homodimer that engages two TNFRSF10B monomers.

Its subcellular location is the host endoplasmic reticulum membrane. Its function is as follows. Evasion of NK cell killing. Blocks surface expression of PVR which is a ligand for NK cell-activating receptors. Binds human PVR in the endoplasmic reticulum and prevents its maturation and transport to the cell surface. Targets also the natural killer cell activating ligand NECTIN2 for proteasome-mediated degradation. Additionally promotes intracellular retention of TNFRSF10A/TRAIL-R1 and TNFRSF10B/TRAIL-R2 and thus down-regulates their cell surface expression. In Human cytomegalovirus (strain Merlin) (HHV-5), this protein is Protein UL141 (UL141).